The following is a 435-amino-acid chain: Cytochrome c biogenesis protein Ccs1 (435 aa).

3 consecutive transmembrane segments (helical) span residues 17–37 (LSLS…GTII), 77–97 (NPCF…CTFS), and 163–183 (IAPI…LISL).

The protein belongs to the Ccs1/CcsB family. As to quaternary structure, may interact with CcsA.

It is found in the plastid. It localises to the chloroplast thylakoid membrane. Required during biogenesis of c-type cytochromes (cytochrome c6 and cytochrome f) at the step of heme attachment. This is Cytochrome c biogenesis protein Ccs1 from Gracilaria tenuistipitata var. liui (Red alga).